Consider the following 454-residue polypeptide: Tubulin alpha-A chain (454 aa).

The GTP site is built by glutamine 12, aspartate 72, serine 141, glycine 145, threonine 146, threonine 180, asparagine 207, and asparagine 229. Aspartate 72 serves as a coordination point for Mg(2+). The active site involves glutamate 255.

The protein belongs to the tubulin family. As to quaternary structure, dimer of alpha and beta chains. A typical microtubule is a hollow water-filled tube with an outer diameter of 25 nm and an inner diameter of 15 nM. Alpha-beta heterodimers associate head-to-tail to form protofilaments running lengthwise along the microtubule wall with the beta-tubulin subunit facing the microtubule plus end conferring a structural polarity. Microtubules usually have 13 protofilaments but different protofilament numbers can be found in some organisms and specialized cells. The cofactor is Mg(2+).

It localises to the cytoplasm. The protein resides in the cytoskeleton. The catalysed reaction is GTP + H2O = GDP + phosphate + H(+). In terms of biological role, tubulin is the major constituent of microtubules, a cylinder consisting of laterally associated linear protofilaments composed of alpha- and beta-tubulin heterodimers. Microtubules grow by the addition of GTP-tubulin dimers to the microtubule end, where a stabilizing cap forms. Below the cap, tubulin dimers are in GDP-bound state, owing to GTPase activity of alpha-tubulin. This chain is Tubulin alpha-A chain (tba-1), found in Neurospora crassa (strain ATCC 24698 / 74-OR23-1A / CBS 708.71 / DSM 1257 / FGSC 987).